A 223-amino-acid chain; its full sequence is Ras-related protein Rab-21 (223 aa).

An N-acetylalanine modification is found at Ala-2. Residues Gly-26, Gly-29, Lys-30, Thr-31, Ser-32, Asn-43, Asp-44, His-46, Thr-48, and Thr-49 each contribute to the GTP site. Mg(2+) is bound at residue Thr-31. The Switch 1 signature appears at 41 to 54 (KFNDKHITTLQASF). Mg(2+) is bound by residues Thr-49 and Asp-72. A Switch 2 motif is present at residues 74 to 92 (AGQERFHALGPIYYRDSNG). The GTP site is built by Gly-75, Asn-130, Lys-131, Asp-133, Ala-161, and Lys-162. S-geranylgeranyl cysteine attachment occurs at residues Cys-219 and Cys-220. The residue at position 220 (Cys-220) is a Cysteine methyl ester. A propeptide spans 221-223 (SSG) (removed in mature form).

Belongs to the small GTPase superfamily. Rab family. Interacts with the cytoplasmic tail of integrins ITGA1, ITGA2, ITGA5, ITGA6, ITGA11 and ITGB1; this interaction is dependent upon its GDP/GTP cycle. Interacts with ANKRD27. Interacts (active GTP-bound form) with TMED10; the interaction is indirect and regulates TMED10 abundance and localization at the Golgi. Mg(2+) is required as a cofactor.

Its subcellular location is the endoplasmic reticulum membrane. The protein resides in the golgi apparatus. The protein localises to the trans-Golgi network. It localises to the golgi apparatus membrane. It is found in the early endosome membrane. Its subcellular location is the cytoplasmic vesicle membrane. The protein resides in the cleavage furrow. The protein localises to the cell projection. It localises to the neuron projection. The enzyme catalyses GTP + H2O = GDP + phosphate + H(+). Its activity is regulated as follows. Regulated by guanine nucleotide exchange factors (GEFs) including ANKRD27 and RABGEF1, which promote the exchange of bound GDP for free GTP. Regulated by GTPase activating proteins (GAPs) which increase the GTP hydrolysis activity. Inhibited by GDP dissociation inhibitors (GDIs). In terms of biological role, the small GTPases Rab are key regulators of intracellular membrane trafficking, from the formation of transport vesicles to their fusion with membranes. Rabs cycle between an inactive GDP-bound form and an active GTP-bound form that is able to recruit to membranes different sets of downstream effectors directly responsible for vesicle formation, movement, tethering and fusion. RAB21 is involved in membrane trafficking control. Regulates integrin internalization and recycling, but does not influence the traffic of endosomally translocated receptors in general. As a result, may regulate cell adhesion and migration. During the mitosis of adherent cells, controls the endosomal trafficking of integrins which is required for the successful completion of cytokinesis. Involved in neurite growth. Modulates protein levels of the cargo receptors TMED2 and TMED10, and required for appropriate Golgi localization of TMED10. This chain is Ras-related protein Rab-21 (RAB21), found in Canis lupus familiaris (Dog).